Here is a 453-residue protein sequence, read N- to C-terminus: Maltotriose-binding protein (453 aa).

The N-terminal stretch at 1-29 is a signal peptide; it reads MKRGIYAVLLVGVLIFSVVASGCIGGTQT. The span at 27-65 shows a compositional bias: low complexity; the sequence is TQTQTETQTPEKTQTPTTTQPSPTTTTSPTQTTSQTPTE. Residues 27–73 form a disordered region; sequence TQTQTETQTPEKTQTPTTTQPSPTTTTSPTQTTSQTPTETETHTQEA.

It belongs to the bacterial solute-binding protein 1 family.

Functionally, involved in an abc transport system for maltotriose. In Pyrococcus abyssi (strain GE5 / Orsay), this protein is Maltotriose-binding protein (malE).